The chain runs to 359 residues: Probable D-xylulose reductase A (359 aa).

Zn(2+) is bound by residues cysteine 47, histidine 72, and glutamate 73. Residue 182-187 (GAGPVG) coordinates NAD(+).

This sequence belongs to the zinc-containing alcohol dehydrogenase family. The cofactor is Zn(2+).

It catalyses the reaction xylitol + NAD(+) = D-xylulose + NADH + H(+). It participates in carbohydrate degradation; L-arabinose degradation via L-arabinitol; D-xylulose 5-phosphate from L-arabinose (fungal route): step 4/5. Xylitol dehydrogenase which catalyzes the conversion of xylitol to D-xylulose. Xylose is a major component of hemicelluloses such as xylan. Most fungi utilize D-xylose via three enzymatic reactions, xylose reductase (XR), xylitol dehydrogenase (XDH), and xylulokinase, to form xylulose 5-phosphate, which enters pentose phosphate pathway. The protein is Probable D-xylulose reductase A (xdhA) of Emericella nidulans (strain FGSC A4 / ATCC 38163 / CBS 112.46 / NRRL 194 / M139) (Aspergillus nidulans).